The following is a 226-amino-acid chain: Probable functional amyloid protease FapD (226 aa).

The first 18 residues, 1–18, serve as a signal peptide directing secretion; the sequence is MRTLILSLLLLVDLTTQA. A Peptidase C39 domain is found at 50–180; the sequence is QKTDFSCGAA…KGWNGIVFAV (131 aa). Residue Cys56 is part of the active site.

Belongs to the FapD family.

It localises to the periplasm. Functionally, probable protease that might be involved in processing fibril precursors. Upon overexpression of the endogenous six-gene locus (fapA-fapF), cells form large clumps during liquid growth, make large amounts of biofilm and produce amyloid fibrils. This Pseudomonas aeruginosa (strain ATCC 15692 / DSM 22644 / CIP 104116 / JCM 14847 / LMG 12228 / 1C / PRS 101 / PAO1) protein is Probable functional amyloid protease FapD.